A 275-amino-acid polypeptide reads, in one-letter code: Sulfur carrier protein FdhD (275 aa).

Cys-121 functions as the Cysteine persulfide intermediate in the catalytic mechanism. 258-263 (FSKPGR) contacts Mo-bis(molybdopterin guanine dinucleotide).

This sequence belongs to the FdhD family.

Its subcellular location is the cytoplasm. Its function is as follows. Required for formate dehydrogenase (FDH) activity. Acts as a sulfur carrier protein that transfers sulfur from IscS to the molybdenum cofactor prior to its insertion into FDH. In Yersinia enterocolitica serotype O:8 / biotype 1B (strain NCTC 13174 / 8081), this protein is Sulfur carrier protein FdhD.